A 189-amino-acid polypeptide reads, in one-letter code: Peptidyl-tRNA hydrolase (189 aa).

Tyrosine 15 contacts tRNA. The Proton acceptor role is filled by histidine 20. Residues phenylalanine 66, asparagine 68, and asparagine 114 each coordinate tRNA.

The protein belongs to the PTH family. As to quaternary structure, monomer.

The protein resides in the cytoplasm. The enzyme catalyses an N-acyl-L-alpha-aminoacyl-tRNA + H2O = an N-acyl-L-amino acid + a tRNA + H(+). Its function is as follows. Hydrolyzes ribosome-free peptidyl-tRNAs (with 1 or more amino acids incorporated), which drop off the ribosome during protein synthesis, or as a result of ribosome stalling. Functionally, catalyzes the release of premature peptidyl moieties from peptidyl-tRNA molecules trapped in stalled 50S ribosomal subunits, and thus maintains levels of free tRNAs and 50S ribosomes. The protein is Peptidyl-tRNA hydrolase of Streptococcus pneumoniae serotype 2 (strain D39 / NCTC 7466).